The following is a 626-amino-acid chain: MTNNDTPGMREYEYKAEMKQLLELIVHSLYTHPEIFLRELISNASDALSKVRFNALTDESIINSDAGLAIRITLDPEAHTIVIEDNGTGMTEEELILNLGTVARSGTLGFLQALKEQQKELDGNLIGQFGVGFYSVFMVTDEVTVETRSSGADSAGYRWRSGAAGTFTIERIEKEQRGTKISFALKDEFKEFSEAYRIEQIIRKYSNFVDFPIFLGDNQINTISALWQRSKNEVSDEERNEFYKFLSNDFNPPLDSLHLSVEGKVCFKALLFLPEEAPPELMYRQGDLESRGPQLYVKKVLIQQECRDLLPEYLRFVAGVVDTEDLPLNVSREVVQSSKVMANIRQILTGKILSWFESMATDQPEKFRKFYKAFGPFLKIGLNTDFTHRDRIIGLMRFESTKTAEGEYVTFKEYVERMEAGQNEIYYHSGSNRIQLLAHPNLEYFQHKGIEVLLLSDPVDVFVIPSIHEYDKKPLKSIEKADIDFTRTGDDKTEPPLPETLSQPLLGLFRQTIGDVIEDVVESHRLVSSPVTLVSGKDSLDSSMEKMMKMMHAEMPAAKKILEVNTSHPIIKNLSGMIMANEHNPLIRTVIQQLYDGALLHEGNLDATTGFLQRMNELIEAATMSR.

Positions 1–332 are a; substrate-binding; that stretch reads MTNNDTPGMR…TEDLPLNVSR (332 aa). Residues 333-546 are b; sequence EVVQSSKVMA…KDSLDSSMEK (214 aa). The interval 547–626 is c; that stretch reads MMKMMHAEMP…ELIEAATMSR (80 aa).

Belongs to the heat shock protein 90 family. In terms of assembly, homodimer.

It localises to the cytoplasm. In terms of biological role, molecular chaperone. Has ATPase activity. This Chlorobium phaeobacteroides (strain DSM 266 / SMG 266 / 2430) protein is Chaperone protein HtpG.